Reading from the N-terminus, the 71-residue chain is Small ribosomal subunit protein bS21 (71 aa).

The protein belongs to the bacterial ribosomal protein bS21 family.

This Baumannia cicadellinicola subsp. Homalodisca coagulata protein is Small ribosomal subunit protein bS21.